The following is a 241-amino-acid chain: tRNA pseudouridine synthase A (241 aa).

The active-site Nucleophile is the Asp52. Tyr111 lines the substrate pocket.

This sequence belongs to the tRNA pseudouridine synthase TruA family. As to quaternary structure, homodimer.

It catalyses the reaction uridine(38/39/40) in tRNA = pseudouridine(38/39/40) in tRNA. Formation of pseudouridine at positions 38, 39 and 40 in the anticodon stem and loop of transfer RNAs. The chain is tRNA pseudouridine synthase A from Ureaplasma parvum serovar 3 (strain ATCC 27815 / 27 / NCTC 11736).